A 1444-amino-acid chain; its full sequence is DNA polymerase III PolC-type (1444 aa).

In terms of domain architecture, Exonuclease spans 428–584; the sequence is YCVFDVETTG…FDAEATAYLA (157 aa).

Belongs to the DNA polymerase type-C family. PolC subfamily.

It localises to the cytoplasm. The catalysed reaction is DNA(n) + a 2'-deoxyribonucleoside 5'-triphosphate = DNA(n+1) + diphosphate. In terms of biological role, required for replicative DNA synthesis. This DNA polymerase also exhibits 3' to 5' exonuclease activity. This Listeria monocytogenes serovar 1/2a (strain ATCC BAA-679 / EGD-e) protein is DNA polymerase III PolC-type.